We begin with the raw amino-acid sequence, 173 residues long: ADP-ribose 1''-phosphate phosphatase (173 aa).

The Macro domain maps to 1–173 (MIRYIKGDLL…YDVEFNVYVI (173 aa)). Residues 7–9 (GDL), 26–28 (ACN), 33–38 (WGGGIA), and 145–151 (INAGIFA) contribute to the substrate site.

The protein belongs to the POA1 family.

The catalysed reaction is ADP-alpha-D-ribose 1''-phosphate + H2O = ADP-D-ribose + phosphate. Its function is as follows. Highly specific phosphatase involved in the metabolism of ADP-ribose 1''-phosphate (Appr1p) which is produced as a consequence of tRNA splicing. The protein is ADP-ribose 1''-phosphate phosphatase (POA1) of Scheffersomyces stipitis (strain ATCC 58785 / CBS 6054 / NBRC 10063 / NRRL Y-11545) (Yeast).